The chain runs to 285 residues: tRNA U34 carboxymethyltransferase (285 aa).

Residues Lys56, Trp70, Lys75, Gly94, 143-144 (VE), Tyr163, and Arg278 contribute to the carboxy-S-adenosyl-L-methionine site.

Belongs to the class I-like SAM-binding methyltransferase superfamily. CmoB family. In terms of assembly, homotetramer.

It carries out the reaction carboxy-S-adenosyl-L-methionine + 5-hydroxyuridine(34) in tRNA = 5-carboxymethoxyuridine(34) in tRNA + S-adenosyl-L-homocysteine + H(+). Its function is as follows. Catalyzes carboxymethyl transfer from carboxy-S-adenosyl-L-methionine (Cx-SAM) to 5-hydroxyuridine (ho5U) to form 5-carboxymethoxyuridine (cmo5U) at position 34 in tRNAs. This Campylobacter hominis (strain ATCC BAA-381 / DSM 21671 / CCUG 45161 / LMG 19568 / NCTC 13146 / CH001A) protein is tRNA U34 carboxymethyltransferase.